Here is a 756-residue protein sequence, read N- to C-terminus: ATP-dependent 6-phosphofructokinase 2 (756 aa).

The segment at 1 to 393 (MEQKFKKGKD…KQTYLNFVSI (393 aa)) is N-terminal catalytic PFK domain 1. ATP-binding positions include Gly20, 81 to 82 (RC), and 111 to 114 (GDGS). Position 112 (Asp112) interacts with Mg(2+). Substrate contacts are provided by residues 157 to 159 (SID), Arg194, 201 to 203 (MGR), Glu257, Arg285, and 291 to 294 (HLQR). Asp159 (proton acceptor) is an active-site residue. Residues 394–404 (PLSTTMPSRTK) form an interdomain linker region. The tract at residues 405 to 756 (TFAVVHIGSP…KKPQEAVLSS (352 aa)) is C-terminal regulatory PFK domain 2. Beta-D-fructose 2,6-bisphosphate-binding positions include Arg474, 530-534 (TISNN), 575-577 (MGS), Glu632, Arg658, and 664-667 (YSQL).

This sequence belongs to the phosphofructokinase type A (PFKA) family. ATP-dependent PFK group I subfamily. Eukaryotic two domain clade 'E' sub-subfamily. Homotetramer. Mg(2+) serves as cofactor.

The protein localises to the cytoplasm. The enzyme catalyses beta-D-fructose 6-phosphate + ATP = beta-D-fructose 1,6-bisphosphate + ADP + H(+). Its pathway is carbohydrate degradation; glycolysis; D-glyceraldehyde 3-phosphate and glycerone phosphate from D-glucose: step 3/4. Its activity is regulated as follows. Allosterically activated by ADP, AMP, or fructose 2,6-bisphosphate, and allosterically inhibited by ATP or citrate. Functionally, catalyzes the phosphorylation of D-fructose 6-phosphate to fructose 1,6-bisphosphate by ATP, the first committing step of glycolysis. In Caenorhabditis elegans, this protein is ATP-dependent 6-phosphofructokinase 2.